The following is a 460-amino-acid chain: Elongation factor 1-alpha (460 aa).

G2 is subject to N,N,N-trimethylglycine. K3 is subject to N6,N6-dimethyllysine; alternate. K3 carries the N6-methyllysine; alternate modification. Residues 6–241 form the tr-type G domain; that stretch reads KQHINIVVIG…DAIEPPVRPT (236 aa). The interval 15–22 is G1; the sequence is GHVDSGKS. 15 to 22 is a GTP binding site; that stretch reads GHVDSGKS. K31 bears the N6-methyllysine mark. The segment at 71–75 is G2; sequence GITID. K80 carries the N6,N6,N6-trimethyllysine modification. Residues 92-95 are G3; sequence DAPG. Residues 92–96 and 154–157 contribute to the GTP site; these read DAPGH and NKMD. Positions 154–157 are G4; it reads NKMD. The segment at 193–195 is G5; sequence SGF. An N6,N6-dimethyllysine; alternate modification is found at K317. An N6-methyllysine; alternate modification is found at K317. At K391 the chain carries N6-methyllysine.

Belongs to the TRAFAC class translation factor GTPase superfamily. Classic translation factor GTPase family. EF-Tu/EF-1A subfamily.

The protein localises to the cytoplasm. In terms of biological role, this protein promotes the GTP-dependent binding of aminoacyl-tRNA to the A-site of ribosomes during protein biosynthesis. The protein is Elongation factor 1-alpha (tef1) of Aspergillus oryzae (strain ATCC 42149 / RIB 40) (Yellow koji mold).